Here is a 330-residue protein sequence, read N- to C-terminus: Free fatty acid receptor 2 (330 aa).

The Extracellular portion of the chain corresponds to 1 to 8 (MTPDWHSS). A helical membrane pass occupies residues 9–29 (LILTAYILIFLTGLPANLLAL). Over 30 to 43 (RAFVSRVRQPQPAP) the chain is Cytoplasmic. The chain crosses the membrane as a helical span at residues 44-64 (VHILLLNLTLADLLLLLLLPF). Topologically, residues 65–79 (RIVEAASNFRWYLPK) are extracellular. A helical transmembrane segment spans residues 80–100 (IVCALTGFGFYSSIYCSTWLL). The Cytoplasmic segment spans residues 101–126 (AGISIERYLGVAFPVQYKLSRRPLYG). Residues 127–147 (VIAALVAWIMSFGHCTIVIIV) form a helical membrane-spanning segment. Over 148–184 (QYLNSTEQVGTENQITCYENFTQAQLDVVLPVRLELC) the chain is Extracellular. 2 N-linked (GlcNAc...) asparagine glycosylation sites follow: Asn151 and Asn167. Residues 185–205 (LVLFFVPMTVTIFCYWRFVWI) traverse the membrane as a helical segment. Residues 206–219 (MLTQPHVGAQRRRR) are Cytoplasmic-facing. The chain crosses the membrane as a helical span at residues 220–240 (AVGLAVVTLLNFLVCFGPYNM). The Extracellular portion of the chain corresponds to 241 to 255 (SHLVGFHLRQSPSWR). A helical membrane pass occupies residues 256-276 (VEAVVFSSLNASLDPLLFYFS). Over 277-330 (SSVVRRAFGKGLLLLRNPGSSMLGRGAEETVEGTKTDRGGSQTEGAQSSDFVTE) the chain is Cytoplasmic. The segment at 300-330 (GRGAEETVEGTKTDRGGSQTEGAQSSDFVTE) is disordered. Positions 302-314 (GAEETVEGTKTDR) are enriched in basic and acidic residues. Residues 315 to 330 (GGSQTEGAQSSDFVTE) show a composition bias toward polar residues.

It belongs to the G-protein coupled receptor 1 family. Interacts with FCN1 (via Fibrinogen C-terminal domain). In terms of tissue distribution, detected in whole wall and separated mucosa in the distal ileum and colon. Expressed by enteroendocrine cells expressing peptide YY (PYY) (at protein level).

It is found in the cell membrane. In terms of biological role, g protein-coupled receptor that is activated by a major product of dietary fiber digestion, the short chain fatty acids (SCFAs), and that plays a role in the regulation of whole-body energy homeostasis and in intestinal immunity. In omnivorous mammals, the short chain fatty acids acetate, propionate and butyrate are produced primarily by the gut microbiome that metabolizes dietary fibers. SCFAs serve as a source of energy but also act as signaling molecules. That G protein-coupled receptor is probably coupled to the pertussis toxin-sensitive, G(i/o)-alpha family of G proteins but also to the Gq family. Its activation results in the formation of inositol 1,4,5-trisphosphate, the mobilization of intracellular calcium, the phosphorylation of the MAPK3/ERK1 and MAPK1/ERK2 kinases and the inhibition of intracellular cAMP accumulation. May play a role in glucose homeostasis by regulating the secretion of GLP-1, in response to short-chain fatty acids accumulating in the intestine. May also regulate the production of LEP/Leptin, a hormone acting on the central nervous system to inhibit food intake. Finally, may also regulate whole-body energy homeostasis through adipogenesis regulating both differentiation and lipid storage of adipocytes. In parallel to its role in energy homeostasis, may also mediate the activation of the inflammatory and immune responses by SCFA in the intestine, regulating the rapid production of chemokines and cytokines. May also play a role in the resolution of the inflammatory response and control chemotaxis in neutrophils. In addition to SCFAs, may also be activated by the extracellular lectin FCN1 in a process leading to activation of monocytes and inducing the secretion of interleukin-8/IL-8 in response to the presence of microbes. This is Free fatty acid receptor 2 (Ffar2) from Rattus norvegicus (Rat).